The sequence spans 615 residues: 1-deoxy-D-xylulose-5-phosphate synthase (615 aa).

Residues His-76 and 117–119 (GHS) contribute to the thiamine diphosphate site. Residue Asp-148 participates in Mg(2+) binding. Thiamine diphosphate contacts are provided by residues 149 to 150 (GA), Asn-177, Tyr-284, and Glu-365. A Mg(2+)-binding site is contributed by Asn-177.

The protein belongs to the transketolase family. DXPS subfamily. In terms of assembly, homodimer. Mg(2+) is required as a cofactor. It depends on thiamine diphosphate as a cofactor.

It carries out the reaction D-glyceraldehyde 3-phosphate + pyruvate + H(+) = 1-deoxy-D-xylulose 5-phosphate + CO2. It functions in the pathway metabolic intermediate biosynthesis; 1-deoxy-D-xylulose 5-phosphate biosynthesis; 1-deoxy-D-xylulose 5-phosphate from D-glyceraldehyde 3-phosphate and pyruvate: step 1/1. Its function is as follows. Catalyzes the acyloin condensation reaction between C atoms 2 and 3 of pyruvate and glyceraldehyde 3-phosphate to yield 1-deoxy-D-xylulose-5-phosphate (DXP). In Francisella tularensis subsp. novicida (strain U112), this protein is 1-deoxy-D-xylulose-5-phosphate synthase.